A 529-amino-acid chain; its full sequence is Peptide chain release factor 3 (529 aa).

Residues 10-279 enclose the tr-type G domain; the sequence is EQRRCFGIIS…ALVEMAPAPG (270 aa). Residues 19–26, 87–91, and 141–144 contribute to the GTP site; these read SHPDAGKT, DTPGH, and NKMD.

It belongs to the TRAFAC class translation factor GTPase superfamily. Classic translation factor GTPase family. PrfC subfamily.

Its subcellular location is the cytoplasm. Functionally, increases the formation of ribosomal termination complexes and stimulates activities of RF-1 and RF-2. It binds guanine nucleotides and has strong preference for UGA stop codons. It may interact directly with the ribosome. The stimulation of RF-1 and RF-2 is significantly reduced by GTP and GDP, but not by GMP. The polypeptide is Peptide chain release factor 3 (Desulfatibacillum aliphaticivorans).